We begin with the raw amino-acid sequence, 434 residues long: MTDFSPREIVSELDRFIVGQADAKRAVSIALRNRWRRLQLDTGLREEVLPKNILMIGPTGVGKTEIARRLAKLAGAPFLKVEATKFTEVGYVGRDVEQIIRDLVEVAIHQVRERKRKDVAARAQLAAEERVLDALVGANSSAATRDSFRRKLRAGELNDKEIEIETQSSGGGMPMFEIPGMPGAQMGAISIGDIFGKLGGRTKTRRVTVEASHDILIAEESDKLLDSDQLVQEAINVVENNGIVFLDEIDKICVRENRHGGDVSREGVQRDLLPLIEGTTVSTKHGAVKTDHILFIASGAFHIAKPSDLLPELQGRLPIRVELQALTRDDMRRILTEPEASLIKQYVALMKTEGVTLDITDDAIDALADVAVAVNSTVENIGARRLQTVMERVLDDISFTASDRTGETMRVDAAYVQQHIGDLAKNADLSRFIL.

Residues Val-18, 60–65, Asp-247, Glu-312, and Arg-384 contribute to the ATP site; that span reads GVGKTE.

Belongs to the ClpX chaperone family. HslU subfamily. A double ring-shaped homohexamer of HslV is capped on each side by a ring-shaped HslU homohexamer. The assembly of the HslU/HslV complex is dependent on binding of ATP.

The protein resides in the cytoplasm. ATPase subunit of a proteasome-like degradation complex; this subunit has chaperone activity. The binding of ATP and its subsequent hydrolysis by HslU are essential for unfolding of protein substrates subsequently hydrolyzed by HslV. HslU recognizes the N-terminal part of its protein substrates and unfolds these before they are guided to HslV for hydrolysis. The sequence is that of ATP-dependent protease ATPase subunit HslU from Bradyrhizobium sp. (strain ORS 278).